The chain runs to 245 residues: 1-(5-phosphoribosyl)-5-[(5-phosphoribosylamino)methylideneamino] imidazole-4-carboxamide isomerase (245 aa).

The active-site Proton acceptor is D10. Catalysis depends on D129, which acts as the Proton donor.

This sequence belongs to the HisA/HisF family.

The protein resides in the cytoplasm. It carries out the reaction 1-(5-phospho-beta-D-ribosyl)-5-[(5-phospho-beta-D-ribosylamino)methylideneamino]imidazole-4-carboxamide = 5-[(5-phospho-1-deoxy-D-ribulos-1-ylimino)methylamino]-1-(5-phospho-beta-D-ribosyl)imidazole-4-carboxamide. The protein operates within amino-acid biosynthesis; L-histidine biosynthesis; L-histidine from 5-phospho-alpha-D-ribose 1-diphosphate: step 4/9. In Parafrankia sp. (strain EAN1pec), this protein is 1-(5-phosphoribosyl)-5-[(5-phosphoribosylamino)methylideneamino] imidazole-4-carboxamide isomerase.